The chain runs to 521 residues: Cholesterol side-chain cleavage enzyme, mitochondrial (521 aa).

The transit peptide at M1 to G39 directs the protein to the mitochondrion. A heme-binding site is contributed by C462.

It belongs to the cytochrome P450 family. In terms of assembly, interacts with FDX1/adrenodoxin. Requires heme as cofactor.

It is found in the mitochondrion inner membrane. The enzyme catalyses 6 reduced [adrenodoxin] + cholesterol + 3 O2 + 6 H(+) = 4-methylpentanal + pregnenolone + 6 oxidized [adrenodoxin] + 4 H2O. It catalyses the reaction 2 reduced [adrenodoxin] + cholesterol + O2 + 2 H(+) = (22R)-hydroxycholesterol + 2 oxidized [adrenodoxin] + H2O. It carries out the reaction (22R)-hydroxycholesterol + 2 reduced [adrenodoxin] + O2 + 2 H(+) = (20R,22R)-20,22-dihydroxycholesterol + 2 oxidized [adrenodoxin] + H2O. The catalysed reaction is (20R,22R)-20,22-dihydroxycholesterol + 2 reduced [adrenodoxin] + O2 + 2 H(+) = 4-methylpentanal + pregnenolone + 2 oxidized [adrenodoxin] + 2 H2O. The protein operates within lipid metabolism; C21-steroid hormone metabolism. It functions in the pathway steroid metabolism; cholesterol metabolism. Functionally, a cytochrome P450 monooxygenase that catalyzes the side-chain hydroxylation and cleavage of cholesterol to pregnenolone, the precursor of most steroid hormones. Catalyzes three sequential oxidation reactions of cholesterol, namely the hydroxylation at C22 followed with the hydroxylation at C20 to yield 20R,22R-hydroxycholesterol that is further cleaved between C20 and C22 to yield the C21-steroid pregnenolone and 4-methylpentanal. Mechanistically, uses molecular oxygen inserting one oxygen atom into a substrate and reducing the second into a water molecule. Two electrons are provided by NADPH via a two-protein mitochondrial transfer system comprising flavoprotein FDXR (adrenodoxin/ferredoxin reductase) and nonheme iron-sulfur protein FDX1 or FDX2 (adrenodoxin/ferredoxin). The chain is Cholesterol side-chain cleavage enzyme, mitochondrial (CYP11A1) from Macaca fascicularis (Crab-eating macaque).